The following is a 523-amino-acid chain: Probable glucose-1-phosphate adenylyltransferase large subunit, chloroplastic (523 aa).

Belongs to the bacterial/plant glucose-1-phosphate adenylyltransferase family. Heterotetramer.

The protein localises to the plastid. The protein resides in the chloroplast. It carries out the reaction alpha-D-glucose 1-phosphate + ATP + H(+) = ADP-alpha-D-glucose + diphosphate. The protein operates within glycan biosynthesis; starch biosynthesis. With respect to regulation, activated by 3'phosphoglycerate, inhibited by orthophosphate. Allosteric regulation. Functionally, this protein plays a role in synthesis of starch. It catalyzes the synthesis of the activated glycosyl donor, ADP-glucose from Glc-1-P and ATP. This chain is Probable glucose-1-phosphate adenylyltransferase large subunit, chloroplastic, found in Arabidopsis thaliana (Mouse-ear cress).